The following is a 272-amino-acid chain: Lyso-glycine lipid O-acyltransferase (272 aa).

This sequence belongs to the O-acyltransferase GlsA family.

It catalyses the reaction a lyso-glycine lipid + a fatty acyl-[ACP] = a glycine lipid + holo-[ACP]. The catalysed reaction is N-[(3R)-3-hydroxyhexadecanoyl]-glycine + hexadecanoyl-[ACP] = N-[(3R)-3-(hexadecanoyloxy)hexadecanoyl]-glycine + holo-[ACP]. Its pathway is lipid metabolism. Functionally, is involved in the production of glycine lipids (GL), which are phosphorus-free membrane lipids important for fitness during growth of the human gut bacterium B.thetaiotaomicron in vivo and in vitro. Catalyzes the second step of GL biosynthesis, i.e. the O-acylation of the hydroxyl group of lyso-glycine lipids, resulting in the production of the mature diacylated glycine lipids. The polypeptide is Lyso-glycine lipid O-acyltransferase (Bacteroides thetaiotaomicron (strain ATCC 29148 / DSM 2079 / JCM 5827 / CCUG 10774 / NCTC 10582 / VPI-5482 / E50)).